A 715-amino-acid chain; its full sequence is Putative membrane protein IgaA homolog (715 aa).

A run of 5 helical transmembrane segments spans residues 2-22 (STIV…GLLW), 214-234 (EACA…GPTV), 235-255 (TLPW…WYLF), 349-369 (NLTL…YVPL), and 663-683 (ATSL…VLLI).

The protein belongs to the IgaA family.

The protein resides in the cell inner membrane. In Yersinia pestis, this protein is Putative membrane protein IgaA homolog.